We begin with the raw amino-acid sequence, 212 residues long: Pyridoxine/pyridoxamine 5'-phosphate oxidase (212 aa).

Substrate is bound by residues R8–Y11 and K66. Residues R61–K66, F76–T77, R82, K83, and Q105 contribute to the FMN site. The substrate site is built by Y123, R127, and S131. FMN contacts are provided by residues Q140–S141 and W184. Substrate is bound at residue R190–H192. R194 contacts FMN.

The protein belongs to the pyridoxamine 5'-phosphate oxidase family. In terms of assembly, homodimer. Requires FMN as cofactor.

The enzyme catalyses pyridoxamine 5'-phosphate + O2 + H2O = pyridoxal 5'-phosphate + H2O2 + NH4(+). It carries out the reaction pyridoxine 5'-phosphate + O2 = pyridoxal 5'-phosphate + H2O2. The protein operates within cofactor metabolism; pyridoxal 5'-phosphate salvage; pyridoxal 5'-phosphate from pyridoxamine 5'-phosphate: step 1/1. It participates in cofactor metabolism; pyridoxal 5'-phosphate salvage; pyridoxal 5'-phosphate from pyridoxine 5'-phosphate: step 1/1. In terms of biological role, catalyzes the oxidation of either pyridoxine 5'-phosphate (PNP) or pyridoxamine 5'-phosphate (PMP) into pyridoxal 5'-phosphate (PLP). In Cupriavidus taiwanensis (strain DSM 17343 / BCRC 17206 / CCUG 44338 / CIP 107171 / LMG 19424 / R1) (Ralstonia taiwanensis (strain LMG 19424)), this protein is Pyridoxine/pyridoxamine 5'-phosphate oxidase.